A 96-amino-acid polypeptide reads, in one-letter code: MSIRPLHDRVIVKRKDAESKSEGGIVLMGSATEKSTRAEVIAVGNGRILENGEVRPLDVKVGDQVIFSEGYGVKTEKIDGEEVLILSESDILAIVE.

The protein belongs to the GroES chaperonin family. In terms of assembly, heptamer of 7 subunits arranged in a ring. Interacts with the chaperonin GroEL.

It is found in the cytoplasm. Its function is as follows. Together with the chaperonin GroEL, plays an essential role in assisting protein folding. The GroEL-GroES system forms a nano-cage that allows encapsulation of the non-native substrate proteins and provides a physical environment optimized to promote and accelerate protein folding. GroES binds to the apical surface of the GroEL ring, thereby capping the opening of the GroEL channel. This Colwellia maris protein is Co-chaperonin GroES.